Here is a 228-residue protein sequence, read N- to C-terminus: MSRAGNRGNTQARWLGIGLLGLFLLPMYLSLEVSVGKATTIYAINGSAILLPCTFSSCYGFENLYFRWSYNNSETSRILIDGIVKNDKSDPKVRVKDDDRITLEGSTKEKMNNISILLSDLEFSDTGRYTCFVRNPKEKDLNNSATIFLQVVDKLEEVDNTVTLIILAVVGGVIGLLVCILLLKKLITFILKKTREKKKECLVSSSGNDNTENGLPGSKAEEKPPTKV.

An N-terminal signal peptide occupies residues 1-30 (MSRAGNRGNTQARWLGIGLLGLFLLPMYLS). Residues 31-148 (LEVSVGKATT…KDLNNSATIF (118 aa)) enclose the Ig-like C2-type domain. Over 31 to 161 (LEVSVGKATT…VDKLEEVDNT (131 aa)) the chain is Extracellular. 4 N-linked (GlcNAc...) asparagine glycosylation sites follow: N45, N71, N113, and N142. C53 and C131 are joined by a disulfide. The chain crosses the membrane as a helical span at residues 162–182 (VTLIILAVVGGVIGLLVCILL). The Cytoplasmic segment spans residues 183–228 (LKKLITFILKKTREKKKECLVSSSGNDNTENGLPGSKAEEKPPTKV). The segment at 199–228 (KECLVSSSGNDNTENGLPGSKAEEKPPTKV) is disordered. A compositionally biased stretch (polar residues) spans 203–213 (VSSSGNDNTEN). Positions 219 to 228 (KAEEKPPTKV) are enriched in basic and acidic residues.

The protein belongs to the sodium channel auxiliary subunit SCN4B (TC 8.A.17) family. A voltage-gated sodium (Nav) channel consists of an ion-conducting pore-forming alpha subunit functional on its own that is regulated by one or more beta subunits. The beta subunit SCN4B is disulfide-linked to the pore-forming alpha subunit. Interacts with SCN1A; regulatory subunit of SCN1A/Nav1.1. Interacts with SCN2A; regulatory subunit of SCN2A/Nav1.2. In terms of processing, contains an interchain disulfide bond with SCN2A. As to expression, expressed at a high level in dorsal root ganglia, at a lower level in brain, spinal cord, skeletal muscle and heart.

It localises to the cell membrane. Functionally, regulatory subunit of multiple voltage-gated sodium (Nav) channels directly mediating the depolarization of excitable membranes. Navs, also called VGSCs (voltage-gated sodium channels) or VDSCs (voltage-dependent sodium channels), operate by switching between closed and open conformations depending on the voltage difference across the membrane. In the open conformation they allow Na(+) ions to selectively pass through the pore, along their electrochemical gradient. The influx of Na+ ions provokes membrane depolarization, initiating the propagation of electrical signals throughout cells and tissues. The accessory beta subunits participate in localization and functional modulation of the Nav channels. Modulates the activity of SCN1A/Nav1.1. Modulates the activity of SCN2A/Nav1.2. This is Sodium channel regulatory subunit beta-4 from Rattus norvegicus (Rat).